A 712-amino-acid polypeptide reads, in one-letter code: Aryl hydrocarbon receptor nuclear translocator 2 (712 aa).

The segment at 36–73 is disordered; the sequence is AGAMPARGGKRRSGMDFDDEDGEGPSKFSRENHSEIER. At Arg-42 the chain carries Omega-N-methylarginine. Basic and acidic residues predominate over residues 63–73; it reads FSRENHSEIER. The 54-residue stretch at 63-116 folds into the bHLH domain; the sequence is FSRENHSEIERRRRNKMTQYITELSDMVPTCSALARKPDKLTILRMAVSHMKSM. 2 consecutive PAS domains span residues 134-209 and 323-393; these read TEQE…MTGR and PVCM…VKLK. The PAC domain maps to 398 to 441; that stretch reads SVMYRFRTKNREWLLIRTSSFTFQNPYSDEIEYVICTNTNVKQL. Positions 573-712 are disordered; sequence AWTGSRPPFP…DLGMFPPFSE (140 aa). Low complexity-rich tracts occupy residues 597-626 and 653-675; these read SSHPYPADPSSYSPLSSPAASSPSGNAYPS and SQWQSQHHGQQSGEQHSHQQPGQ.

As to quaternary structure, efficient DNA binding requires dimerization with another bHLH protein. Heterodimer with NPAS4 or SIM1. Heterodimer with the aryl hydrocarbon receptor (AHR) or the SIM1 protein. Interacts with TACC3. Restricted to adult brain and kidney.

It is found in the nucleus. Functionally, transcription factor that plays a role in the development of the hypothalamo-pituitary axis, postnatal brain growth, and visual and renal function. Specifically recognizes the xenobiotic response element (XRE). The protein is Aryl hydrocarbon receptor nuclear translocator 2 (Arnt2) of Mus musculus (Mouse).